We begin with the raw amino-acid sequence, 204 residues long: Urease accessory protein UreG (204 aa).

GTP is bound at residue 10–17 (GPVGAGKT).

This sequence belongs to the SIMIBI class G3E GTPase family. UreG subfamily. Homodimer. UreD, UreF and UreG form a complex that acts as a GTP-hydrolysis-dependent molecular chaperone, activating the urease apoprotein by helping to assemble the nickel containing metallocenter of UreC. The UreE protein probably delivers the nickel.

It localises to the cytoplasm. Functionally, facilitates the functional incorporation of the urease nickel metallocenter. This process requires GTP hydrolysis, probably effectuated by UreG. The chain is Urease accessory protein UreG from Bacillus sp. (strain TB-90).